Consider the following 659-residue polypeptide: Methionine--tRNA ligase (659 aa).

The short motif at 13–23 (YYPSGNLHIGH) is the 'HIGH' region element. Residues 308 to 312 (KMSKS) carry the 'KMSKS' region motif. An ATP-binding site is contributed by Lys311. Residues 559–659 (DFDKVEIKAA…SAIPNGAVIK (101 aa)) enclose the tRNA-binding domain.

The protein belongs to the class-I aminoacyl-tRNA synthetase family. MetG type 2B subfamily. As to quaternary structure, homodimer.

It localises to the cytoplasm. The catalysed reaction is tRNA(Met) + L-methionine + ATP = L-methionyl-tRNA(Met) + AMP + diphosphate. Is required not only for elongation of protein synthesis but also for the initiation of all mRNA translation through initiator tRNA(fMet) aminoacylation. The protein is Methionine--tRNA ligase of Staphylococcus haemolyticus (strain JCSC1435).